Here is a 410-residue protein sequence, read N- to C-terminus: Multidrug resistance protein MdtM (410 aa).

Residues 1–11 (MPRFFARHAAT) lie on the Cytoplasmic side of the membrane. The chain crosses the membrane as a helical span at residues 12–32 (LFFPMALILYDFAAYLSTDLI). The Periplasmic segment spans residues 33–48 (QPGIINVVRDFNADVS). Residues 49-69 (LAPAAVSLYLAGGMALQWLLG) traverse the membrane as a helical segment. The Cytoplasmic segment spans residues 70–78 (PLSDRIGRK). Residues 79–99 (PVLITGALIFTLACAATMFTT) form a helical membrane-spanning segment. At 100 to 103 (SMTQ) the chain is on the periplasmic side. A helical transmembrane segment spans residues 104 to 124 (FLIARAIQGTSICFIATVGYV). The Cytoplasmic portion of the chain corresponds to 125–140 (TVQEAFGQTKGIKLMA). A helical membrane pass occupies residues 141–161 (IITSIVLIAPIIGPLSGAALM). Over 162 to 167 (HFVHWK) the chain is Periplasmic. Residues 168–188 (VLFAIIAVMGFISFVGLLLAM) form a helical membrane-spanning segment. At 189–216 (PETVKRGAVPFSAKSVLRDFRNVFCNRL) the chain is on the cytoplasmic side. A helical membrane pass occupies residues 217–237 (FLFGAATISLSYIPMMSWVAV). The Periplasmic segment spans residues 238–251 (SPVILIDAGGLTTS). A helical transmembrane segment spans residues 252–272 (QFAWTQVPVFGAVIVANAIVA). Residues 273 to 282 (RFVKDPTEPR) lie on the Cytoplasmic side of the membrane. Residues 283–303 (FIWRAVPIQLVGLALLIIGNL) traverse the membrane as a helical segment. The Periplasmic segment spans residues 304–307 (LSPH). The chain crosses the membrane as a helical span at residues 308–328 (VWLWSVLGTSLYAFGIGLIFP). The Cytoplasmic segment spans residues 329-348 (TLFRFTLFSNNLPKGTVSAS). The chain crosses the membrane as a helical span at residues 349–369 (LNMVILMVMSVSVEIGRWLWF). Residues 370–373 (NGGR) lie on the Periplasmic side of the membrane. The chain crosses the membrane as a helical span at residues 374–394 (LPFHLLAVVAGVIVVFTLAGL). Over 395–410 (LNRVRQHQAAELAEEQ) the chain is Cytoplasmic.

It belongs to the major facilitator superfamily.

The protein localises to the cell inner membrane. Functionally, proton-dependent efflux pump. Confers resistance to a broad spectrum of chemically unrelated substrates. This Escherichia coli O157:H7 protein is Multidrug resistance protein MdtM (mdtM).